The chain runs to 251 residues: UPF0309 protein SAV_3856 (251 aa).

Residues 36 to 220 form the SIS domain; sequence IADTVADGGR…AGTLADRGIE (185 aa).

This sequence belongs to the UPF0309 family.

In Streptomyces avermitilis (strain ATCC 31267 / DSM 46492 / JCM 5070 / NBRC 14893 / NCIMB 12804 / NRRL 8165 / MA-4680), this protein is UPF0309 protein SAV_3856.